A 464-amino-acid polypeptide reads, in one-letter code: MMARRDPKSWAKRLVRAQTLQKQRRAPVGPRAPPPDEEDPRLKCKNCGAFGHTARSTTCPMKCWKAALVPATLGKKEGKENLKPWKPRGEANPGPLNKDKGEKEERPRQQDPQRKALLHMFSGKPPEKPLPNGKGSTESSEHLRVASGPMPVHTTSKRPRVDPVLADRSATEMSGRGSVLASLSPLRKASLSSSSSLGPKERQTGAAADIPQPAFRHQGPEPLLVVKPTHSSPEGGCREVPQAASKTHGLLQAARPQAQDKRPAVTSQPCPPAATHSLGLGSNLSFGPGAKRPAQAPIQACLNFPKKPRLGPFQIPESAIQGGELGAPENLQPPPAATELGPSTSPQMGRRTPAQVPSVDWQPPHSTPCLPTAQACTMSHHPAAGHDGAQPLRVLFRRLENGRWSSSLLAAPSFHSPEKPGAFLAQSPHVSEKSEAPCVRVPPSVLYEDLQVSSSSEDSDSDLE.

Disordered stretches follow at residues 1-42 (MMAR…DPRL), 69-373 (VPAT…LPTA), and 415-437 (HSPE…SEAP). Basic and acidic residues-rich tracts occupy residues 74 to 89 (GKKE…KPRG) and 97 to 114 (NKDK…DPQR). Over residues 180–197 (LASLSPLRKASLSSSSSL) the composition is skewed to low complexity.

It belongs to the FAM90 family.

In Homo sapiens (Human), this protein is Protein FAM90A10 (FAM90A10).